Reading from the N-terminus, the 187-residue chain is UPF0301 protein Pcryo_0062 (187 aa).

Belongs to the UPF0301 (AlgH) family.

This Psychrobacter cryohalolentis (strain ATCC BAA-1226 / DSM 17306 / VKM B-2378 / K5) protein is UPF0301 protein Pcryo_0062.